We begin with the raw amino-acid sequence, 69 residues long: MSVLTPLLLRGLTGSARRLPVPRAKIHSLPPDEKLGIMELAVGLTSCFVTFLLPAGWILSHLETYRRPE.

The N-terminal 25 residues, 1–25, are a transit peptide targeting the mitochondrion; that stretch reads MSVLTPLLLRGLTGSARRLPVPRAK. Positions 2–19 match the SIFI-degron motif; sequence SVLTPLLLRGLTGSARRL. Residues 26–36 lie on the Mitochondrial matrix side of the membrane; the sequence is IHSLPPDEKLG. A helical membrane pass occupies residues 37–60; the sequence is IMELAVGLTSCFVTFLLPAGWILS. Residues 61–69 lie on the Mitochondrial intermembrane side of the membrane; that stretch reads HLETYRRPE.

This sequence belongs to the cytochrome c oxidase VIII family. Component of the cytochrome c oxidase (complex IV, CIV), a multisubunit enzyme composed of 14 subunits. The complex is composed of a catalytic core of 3 subunits MT-CO1, MT-CO2 and MT-CO3, encoded in the mitochondrial DNA, and 11 supernumerary subunits COX4I, COX5A, COX5B, COX6A, COX6B, COX6C, COX7A, COX7B, COX7C, COX8 and NDUFA4, which are encoded in the nuclear genome. The complex exists as a monomer or a dimer and forms supercomplexes (SCs) in the inner mitochondrial membrane with NADH-ubiquinone oxidoreductase (complex I, CI) and ubiquinol-cytochrome c oxidoreductase (cytochrome b-c1 complex, complex III, CIII), resulting in different assemblies (supercomplex SCI(1)III(2)IV(1) and megacomplex MCI(2)III(2)IV(2)). Post-translationally, in response to mitochondrial stress, the precursor protein is ubiquitinated by the SIFI complex in the cytoplasm before mitochondrial import, leading to its degradation. Within the SIFI complex, UBR4 initiates ubiquitin chain that are further elongated or branched by KCMF1.

The protein resides in the mitochondrion inner membrane. It participates in energy metabolism; oxidative phosphorylation. Its function is as follows. Component of the cytochrome c oxidase, the last enzyme in the mitochondrial electron transport chain which drives oxidative phosphorylation. The respiratory chain contains 3 multisubunit complexes succinate dehydrogenase (complex II, CII), ubiquinol-cytochrome c oxidoreductase (cytochrome b-c1 complex, complex III, CIII) and cytochrome c oxidase (complex IV, CIV), that cooperate to transfer electrons derived from NADH and succinate to molecular oxygen, creating an electrochemical gradient over the inner membrane that drives transmembrane transport and the ATP synthase. Cytochrome c oxidase is the component of the respiratory chain that catalyzes the reduction of oxygen to water. Electrons originating from reduced cytochrome c in the intermembrane space (IMS) are transferred via the dinuclear copper A center (CU(A)) of subunit 2 and heme A of subunit 1 to the active site in subunit 1, a binuclear center (BNC) formed by heme A3 and copper B (CU(B)). The BNC reduces molecular oxygen to 2 water molecules using 4 electrons from cytochrome c in the IMS and 4 protons from the mitochondrial matrix. The chain is Cytochrome c oxidase subunit 8A, mitochondrial (COX8A) from Gorilla gorilla gorilla (Western lowland gorilla).